The chain runs to 164 residues: ATP synthase subunit b (164 aa).

The chain crosses the membrane as a helical span at residues 6-26; that stretch reads GELVGNFILVTGSVIVLLLLI.

The protein belongs to the ATPase B chain family. F-type ATPases have 2 components, F(1) - the catalytic core - and F(0) - the membrane proton channel. F(1) has five subunits: alpha(3), beta(3), gamma(1), delta(1), epsilon(1). F(0) has three main subunits: a(1), b(2) and c(10-14). The alpha and beta chains form an alternating ring which encloses part of the gamma chain. F(1) is attached to F(0) by a central stalk formed by the gamma and epsilon chains, while a peripheral stalk is formed by the delta and b chains.

Its subcellular location is the cell membrane. F(1)F(0) ATP synthase produces ATP from ADP in the presence of a proton or sodium gradient. F-type ATPases consist of two structural domains, F(1) containing the extramembraneous catalytic core and F(0) containing the membrane proton channel, linked together by a central stalk and a peripheral stalk. During catalysis, ATP synthesis in the catalytic domain of F(1) is coupled via a rotary mechanism of the central stalk subunits to proton translocation. Its function is as follows. Component of the F(0) channel, it forms part of the peripheral stalk, linking F(1) to F(0). The polypeptide is ATP synthase subunit b (Streptococcus pyogenes serotype M12 (strain MGAS2096)).